Consider the following 1568-residue polypeptide: Myosin-2 (1568 aa).

One can recognise a Myosin N-terminal SH3-like domain in the interval 4–57 (EVGTRCWYPHKELGWIGAEVIKNEVKDGKYHLELSLEDDEVVSVDTEDLNDDKN). A Myosin motor domain is found at 70 to 783 (EATEDLTSLS…MLAYLEKLRS (714 aa)). ATP is bound at residue 164–171 (GESGAGKT). Residues 443–523 (FIGVLDIYGF…LGILSLLDEE (81 aa)) are actin-binding. Residues 619–641 (KKAELEQNNPGNKKPGPARTVNR) form a disordered region. 6 IQ domains span residues 786-808 (MHNS…QYLK), 809-833 (ISQA…YHEM), 834-856 (KVHS…NVFN), 857-881 (VLIT…KREH), 882-904 (EYNA…TFLN), and 905-934 (TKRD…DAKS). Residues 944 to 1088 (KLENKVIELT…ISRLQTAMSL (145 aa)) adopt a coiled-coil conformation. Residues 1089–1568 (GTVTTSVLPQ…VAQQVVQDGH (480 aa)) form a non alpha-helical, tail domain region. In terms of domain architecture, Dilute spans 1223–1498 (AQVLTTIQKV…LRYVADIVKK (276 aa)).

Belongs to the TRAFAC class myosin-kinesin ATPase superfamily. Myosin family. Homodimer. Interacts with calmodulin (CMD1) and the myosin light chain MLC1 through its IQ repeats.

Myosin heavy chain that is required for the cell cycle-regulated transport of various organelles and proteins for their segregation. Functions by binding with its tail domain to receptor proteins on organelles and exerting force with its N-terminal motor domain against actin filaments, thereby transporting its cargo along polarized actin cables. This is Myosin-2 (MYO2) from Saccharomyces uvarum (strain ATCC 76518 / CBS 7001 / CLIB 283 / NBRC 10550 / MCYC 623 / NCYC 2669 / NRRL Y-11845) (Yeast).